Here is a 395-residue protein sequence, read N- to C-terminus: Phosphatidylinositol 4-phosphate 5-kinase-like protein 1 (395 aa).

Residues 1 to 25 form a disordered region; the sequence is MATPSLRSHEIPAHSQEAGNKSISS. Residues 37 to 394 form the PIPK domain; the sequence is ARQSRVGLFE…RLCRWAEVHT (358 aa).

As to quaternary structure, interacts with type I phosphatidylinositol 4-phosphate 5-kinases, including PIP5K1A and PIP5K1B. In terms of tissue distribution, highly expressed in brain and testis, relatively to heart, spleen, lung, liver, skeletal muscle and kidney.

The protein resides in the cytoplasm. It localises to the membrane. Functionally, may act as a scaffold to localize and regulate type I phosphatidylinositol 4-phosphate 5-kinases to specific compartments within the cell, where they generate PI(4,5)P2 for actin nucleation, signaling and scaffold protein recruitment and conversion to PI(3,4,5)P3. The chain is Phosphatidylinositol 4-phosphate 5-kinase-like protein 1 (Pip5kl1) from Mus musculus (Mouse).